The primary structure comprises 688 residues: Elongation factor G (688 aa).

A tr-type G domain is found at 8-282 (EKTRNIGIMA…AIIDYLPSPM (275 aa)). GTP contacts are provided by residues 17–24 (AHIDAGKT), 81–85 (DTPGH), and 135–138 (NKMD).

It belongs to the TRAFAC class translation factor GTPase superfamily. Classic translation factor GTPase family. EF-G/EF-2 subfamily.

It localises to the cytoplasm. Catalyzes the GTP-dependent ribosomal translocation step during translation elongation. During this step, the ribosome changes from the pre-translocational (PRE) to the post-translocational (POST) state as the newly formed A-site-bound peptidyl-tRNA and P-site-bound deacylated tRNA move to the P and E sites, respectively. Catalyzes the coordinated movement of the two tRNA molecules, the mRNA and conformational changes in the ribosome. In Apple proliferation phytoplasma, this protein is Elongation factor G (fusA).